The chain runs to 78 residues: MSRVCQVTGKKPMVGNNRSHAKNSTRRRFLPNLQNHRFWLEGEKRFVKLRISTKGMRIIDKKGIEVVVAELRARGEKV.

Positions 1 to 23 (MSRVCQVTGKKPMVGNNRSHAKN) are disordered.

The protein belongs to the bacterial ribosomal protein bL28 family.

The polypeptide is Large ribosomal subunit protein bL28 (Shewanella sediminis (strain HAW-EB3)).